The chain runs to 75 residues: U6-lycotoxin-Ls1f (75 aa).

The signal sequence occupies residues Met1 to Ala21. Residues Glu22–Arg25 constitute a propeptide that is removed on maturation.

It belongs to the neurotoxin 19 (CSTX) family. 06 (U6-Lctx) subfamily. Post-translationally, contains 4 disulfide bonds. In terms of tissue distribution, expressed by the venom gland.

Its subcellular location is the secreted. This Lycosa singoriensis (Wolf spider) protein is U6-lycotoxin-Ls1f.